Here is a 282-residue protein sequence, read N- to C-terminus: Pantothenate synthetase (282 aa).

Residue 26-33 coordinates ATP; sequence MGNLHEGH. The active-site Proton donor is H33. Position 57 (Q57) interacts with (R)-pantoate. Beta-alanine is bound at residue Q57. Residue 144–147 participates in ATP binding; the sequence is GKKD. Q150 is a binding site for (R)-pantoate. ATP is bound by residues I173 and 181–184; that span reads LSSR.

The protein belongs to the pantothenate synthetase family. In terms of assembly, homodimer.

It is found in the cytoplasm. The catalysed reaction is (R)-pantoate + beta-alanine + ATP = (R)-pantothenate + AMP + diphosphate + H(+). The protein operates within cofactor biosynthesis; (R)-pantothenate biosynthesis; (R)-pantothenate from (R)-pantoate and beta-alanine: step 1/1. In terms of biological role, catalyzes the condensation of pantoate with beta-alanine in an ATP-dependent reaction via a pantoyl-adenylate intermediate. The chain is Pantothenate synthetase from Cupriavidus necator (strain ATCC 17699 / DSM 428 / KCTC 22496 / NCIMB 10442 / H16 / Stanier 337) (Ralstonia eutropha).